We begin with the raw amino-acid sequence, 87 residues long: Small ribosomal subunit protein bS20 (87 aa).

Positions 1-26 (MANIKSAKKRAVQSEKARKHNASRRS) are disordered.

It belongs to the bacterial ribosomal protein bS20 family.

Functionally, binds directly to 16S ribosomal RNA. This is Small ribosomal subunit protein bS20 from Klebsiella pneumoniae (strain 342).